An 85-amino-acid chain; its full sequence is Large ribosomal subunit protein bL27 (85 aa).

The tract at residues 1–20 (MAHKKAGGSTRNGRDSEAKR) is disordered.

Belongs to the bacterial ribosomal protein bL27 family.

This is Large ribosomal subunit protein bL27 from Escherichia coli O139:H28 (strain E24377A / ETEC).